A 1055-amino-acid polypeptide reads, in one-letter code: Leukotoxin (1055 aa).

Residues 11–49 (QQAAQFANSVADRAKENIDAAKEQLQKALDKLGKTGKKL) adopt a coiled-coil conformation. 2 cholesterol recognition/amino acid consensus (CRAC) region regions span residues 334–340 (LEEYSKR) and 502–506 (VDYLK). Hemolysin-type calcium-binding repeat units lie at residues 721–738 (IGST…NDVF), 739–756 (HGHD…DDRL), 757–774 (YGDN…NDKL), 775–792 (YGGA…NNYL), 793–810 (DGGE…SDIL), 811–828 (RGGS…DDLL), and 829–846 (DGGE…NDIY). Positions 795 to 815 (GEGDDHLEGGNGSDILRGGSG) are disordered. The interval 990 to 1009 (KGKSSSLMSSSRSSSMLTQK) is disordered. Positions 993–1006 (SSSLMSSSRSSSML) are enriched in low complexity.

Belongs to the RTX prokaryotic toxin (TC 1.C.11) family. Interacts specifically with the superoxide dismutase [Cu-Zn]. This interaction may protect LtxA from reactive oxygen species and reactive nitrogen species produced by host inflammatory cells during disease. Interacts with the human leukocyte adhesion glycoprotein LFA-1 (ITGAL-ITGB2). In terms of processing, acylated at Lys-562 and Lys-687 by LtxC. This modification is required for full activity. Isolated methyl esters contain palmitoyl and palmitolyl fatty acyl groups with smaller quantities of myristic and stearic fatty acids.

Its subcellular location is the cell outer membrane. The protein localises to the secreted. Its function is as follows. Virulence factor that plays an important role in immune evasion. Lyses human lymphocytes and monocytes. Binds to the LFA-1 integrin on the surface of the host cell and to cholesterol-containing membranes, which probably results in large LtxA-LFA-1 clusters in lipid rafts. Also shows beta-hemolytic activity on certain types of growth media. This is Leukotoxin from Aggregatibacter actinomycetemcomitans (Actinobacillus actinomycetemcomitans).